A 564-amino-acid chain; its full sequence is Centrosomal protein kizuna (564 aa).

A disordered region spans residues 1–21 (MSEAGRAAAGPCPEVSPSRSQ). The stretch at 28–50 (RCLRDSETRRLELERKLMEYKSS) forms a coiled coil. Disordered regions lie at residues 178–201 (QPAA…PTQA), 304–345 (TGPQ…EDEP), 442–465 (ECGD…PNDS), 487–519 (IGNN…RPEF), and 531–564 (AFWG…DFYD). The segment covering 313 to 324 (QQAASQDSSSSS) has biased composition (low complexity). A compositionally biased stretch (polar residues) spans 447 to 463 (SSVQSNESSYSLPSIPN). Basic and acidic residues predominate over residues 493–519 (EAKESQEMCSERSSSSERSGDLSRPEF).

It belongs to the kizuna family.

It localises to the cytoplasm. The protein localises to the cytoskeleton. The protein resides in the microtubule organizing center. It is found in the centrosome. Its subcellular location is the cilium basal body. In terms of biological role, centrosomal protein required for establishing a robust mitotic centrosome architecture that can endure the forces that converge on the centrosomes during spindle formation. Required for stabilizing the expanded pericentriolar material around the centriole. In Gallus gallus (Chicken), this protein is Centrosomal protein kizuna (KIZ).